The primary structure comprises 241 residues: Ribosomal RNA small subunit methyltransferase G (241 aa).

S-adenosyl-L-methionine is bound by residues Gly-96, Phe-101, 119–121 (EAS), 147–148 (VE), and Arg-166.

Belongs to the methyltransferase superfamily. RNA methyltransferase RsmG family.

It localises to the cytoplasm. The enzyme catalyses guanosine(527) in 16S rRNA + S-adenosyl-L-methionine = N(7)-methylguanosine(527) in 16S rRNA + S-adenosyl-L-homocysteine. Specifically methylates the N7 position of guanine in position 527 of 16S rRNA. In Syntrophus aciditrophicus (strain SB), this protein is Ribosomal RNA small subunit methyltransferase G.